The chain runs to 300 residues: ADP,ATP carrier protein 2 (300 aa).

Solcar repeat units lie at residues Val8–Val100, Arg113–Met203, and Val214–Val299. 5 helical membrane passes run Phe10–Gln39, Leu77–Phe101, Thr112–Phe132, Val181–Arg201, and Tyr213–Phe233. Arg82 and Lys94 together coordinate ADP. Arg237 provides a ligand contact to ADP. The interval Arg237–Met242 is important for transport activity. Positions Arg237 to Met242 match the Nucleotide carrier signature motif motif. The helical transmembrane segment at Ala276 to Tyr293 threads the bilayer.

Belongs to the mitochondrial carrier (TC 2.A.29) family. As to quaternary structure, monomer.

It localises to the mitochondrion inner membrane. It catalyses the reaction ADP(in) + ATP(out) = ADP(out) + ATP(in). Its activity is regulated as follows. The matrix-open state (m-state) is inhibited by the membrane-permeable bongkrekic acid (BKA). The cytoplasmic-open state (c-state) is inhibited by the membrane-impermeable toxic inhibitor carboxyatractyloside (CATR). Functionally, ADP:ATP antiporter that mediates import of ADP into the mitochondrial matrix for ATP synthesis, and export of ATP out to fuel the cell. Cycles between the cytoplasmic-open state (c-state) and the matrix-open state (m-state): operates by the alternating access mechanism with a single substrate-binding site intermittently exposed to either the cytosolic (c-state) or matrix (m-state) side of the inner mitochondrial membrane. This chain is ADP,ATP carrier protein 2, found in Anopheles gambiae (African malaria mosquito).